A 947-amino-acid polypeptide reads, in one-letter code: Ionotropic receptor 25a (947 aa).

Positions 1–30 (MILMNPKTSKILWLLGFLSLLSSFSLEIAA) are cleaved as a signal peptide. Over 31–562 (QTTQNINVLF…SLFKFLTVLE (532 aa)) the chain is Extracellular. N-linked (GlcNAc...) asparagine glycosylation is found at asparagine 78, asparagine 177, asparagine 277, and asparagine 434. Residues 563–583 (TNVWLCILAAYFFTSFLMWIF) form a helical membrane-spanning segment. At 584 to 641 (DRWSPYSYQNNREKYKDDEEKREFNLKECLWFCMTSLTPQGGGEAPKNLSGRLVAATW) the chain is on the cytoplasmic side. The chain crosses the membrane as a helical span at residues 642–662 (WLFGFIIIASYTANLAAFLTV). At 663 to 858 (SRLDTPVESL…DQSDGISIQN (196 aa)) the chain is on the extracellular side. Asparagine 687, asparagine 715, and asparagine 762 each carry an N-linked (GlcNAc...) asparagine glycan. Residues 859-879 (IGGVFIVIFVGIGMACITLVF) traverse the membrane as a helical segment. Residues 880-947 (EYWWYRYRKN…QYPATFKPRF (68 aa)) lie on the Cytoplasmic side of the membrane.

It belongs to the glutamate-gated ion channel (TC 1.A.10.1) family. As to quaternary structure, interacts with nocte. As to expression, in the antenna, detected in neurons of the arista and also detected in sacculus neurons which innervate the first and second chambers (at protein level). Throughout the main body of the antenna, expressed in neurons which innervate the coeloconic class of olfactory sensilla (at protein level). Expressed in multiple cells of the dorsal organ including the dorsal organ cool cells (at protein level). Detected in femur and retina. Expressed in a subset of femur chordonotal neurons and antennal Johnston's Organ neurons.

It is found in the cell membrane. It localises to the cell projection. The protein resides in the axon. The protein localises to the dendrite. Its subcellular location is the perikaryon. It is found in the cilium. Integral part of various neural sensory systems in the antenna that provide the neural basis for the response to environmental changes in temperature (thermosensation), humidity (hygrosensation) and odor detection. Required for odor-evoked electrophysiological responses in multiple neuron classes in the antenna and is likely to function as part of an olfactory receptor complex with Ir76a and Ir76b. Together with Ir21a and Ir93a, mediates the response of the larval dorsal organ cool cells, a trio of cool-responsive neurons, to cooling and is required for cool avoidance behavior. Required in chordonotal organ neurons for behavioral synchronization to low-amplitude temperature cycles and mediates circadian clock resetting by temperature. Together with Ir40a and Ir93a, mediates the response of the hydrosensory sacculus neurons to changes in relative humidity, and is required for dry detection and humidiy preference behavior. The sequence is that of Ionotropic receptor 25a from Drosophila melanogaster (Fruit fly).